The primary structure comprises 550 residues: Hydroxylamine reductase (550 aa).

Positions 3, 6, 18, and 25 each coordinate [2Fe-2S] cluster. The hybrid [4Fe-2O-2S] cluster site is built by His-249, Glu-273, Cys-317, Cys-405, Cys-433, Cys-458, Glu-492, and Lys-494. Cys-405 carries the cysteine persulfide modification.

This sequence belongs to the HCP family. Requires [2Fe-2S] cluster as cofactor. The cofactor is hybrid [4Fe-2O-2S] cluster.

It localises to the cytoplasm. It carries out the reaction A + NH4(+) + H2O = hydroxylamine + AH2 + H(+). Catalyzes the reduction of hydroxylamine to form NH(3) and H(2)O. In Yersinia pseudotuberculosis serotype O:1b (strain IP 31758), this protein is Hydroxylamine reductase.